The chain runs to 170 residues: Putative 5'(3')-deoxyribonucleotidase (170 aa).

Asp-28 functions as the Nucleophile in the catalytic mechanism. Mg(2+) contacts are provided by Asp-28, Asp-30, and Asp-134. The active-site Proton donor is Asp-30.

Belongs to the 5'(3')-deoxyribonucleotidase family. Mg(2+) is required as a cofactor.

Its function is as follows. Dephosphorylates the 5' and 2'(3')-phosphates of deoxyribonucleotides. This chain is Putative 5'(3')-deoxyribonucleotidase, found in Vibrio parahaemolyticus (KVP40).